We begin with the raw amino-acid sequence, 847 residues long: DNA ligase (847 aa).

A compositionally biased stretch (low complexity) spans 1–22 (MSDTTTGSDAADAAVPATTPAD). The disordered stretch occupies residues 1–23 (MSDTTTGSDAADAAVPATTPADL). NAD(+)-binding positions include 54-58 (DAEYD), 104-105 (SL), and E135. The N6-AMP-lysine intermediate role is filled by K137. NAD(+) is bound by residues R158, E195, K326, and K350. 4 residues coordinate Zn(2+): C444, C447, C463, and C469. Positions 686–775 (AAGGVLAGLA…PDAIALPEAD (90 aa)) constitute a BRCT domain. The interval 770 to 847 (ALPEADPVPD…AEPDGPAETP (78 aa)) is disordered. Composition is skewed to low complexity over residues 786–807 (DGGSAEDATAATAGAAEAATAE) and 819–833 (PAAAAAAPPTDVEAG).

It belongs to the NAD-dependent DNA ligase family. LigA subfamily. It depends on Mg(2+) as a cofactor. The cofactor is Mn(2+).

It carries out the reaction NAD(+) + (deoxyribonucleotide)n-3'-hydroxyl + 5'-phospho-(deoxyribonucleotide)m = (deoxyribonucleotide)n+m + AMP + beta-nicotinamide D-nucleotide.. DNA ligase that catalyzes the formation of phosphodiester linkages between 5'-phosphoryl and 3'-hydroxyl groups in double-stranded DNA using NAD as a coenzyme and as the energy source for the reaction. It is essential for DNA replication and repair of damaged DNA. The chain is DNA ligase from Clavibacter sepedonicus (Clavibacter michiganensis subsp. sepedonicus).